We begin with the raw amino-acid sequence, 447 residues long: Elongation factor 1-alpha (447 aa).

One can recognise a tr-type G domain in the interval 5–230 (KFHINIVVIG…DQINDAKRPS (226 aa)). The interval 14 to 21 (GHVDSGKS) is G1. 14 to 21 (GHVDSGKS) contributes to the GTP binding site. Residue Lys-55 is modified to N6,N6-dimethyllysine. The tract at residues 70–74 (GITID) is G2. N6,N6,N6-trimethyllysine is present on Lys-79. Positions 91-94 (DAPG) are G3. GTP-binding positions include 91–95 (DAPGH) and 153–156 (NKMD). Residues 153–156 (NKMD) are G4. At Lys-187 the chain carries N6,N6,N6-trimethyllysine. The tract at residues 194 to 196 (SGF) is G5. Lys-261 carries the post-translational modification N6-methyllysine. Position 289 is a 5-glutamyl glycerylphosphorylethanolamine (Glu-289). Lys-306 carries the N6,N6,N6-trimethyllysine modification. Glu-362 is modified (5-glutamyl glycerylphosphorylethanolamine). Lys-396 carries the post-translational modification N6,N6,N6-trimethyllysine.

The protein belongs to the TRAFAC class translation factor GTPase superfamily. Classic translation factor GTPase family. EF-Tu/EF-1A subfamily. As to expression, was detected in all tissues examined but was most abundant in roots and salt-adapted cultured cells.

Its subcellular location is the cytoplasm. Its function is as follows. This protein promotes the GTP-dependent binding of aminoacyl-tRNA to the A-site of ribosomes during protein biosynthesis. The chain is Elongation factor 1-alpha from Nicotiana tabacum (Common tobacco).